The primary structure comprises 612 residues: Dihydroxy-acid dehydratase (612 aa).

Residue D81 participates in Mg(2+) binding. C122 contributes to the [2Fe-2S] cluster binding site. The Mg(2+) site is built by D123 and K124. Residue K124 is modified to N6-carboxylysine. A [2Fe-2S] cluster-binding site is contributed by C193. E489 contributes to the Mg(2+) binding site. The active-site Proton acceptor is S515.

This sequence belongs to the IlvD/Edd family. In terms of assembly, homodimer. [2Fe-2S] cluster serves as cofactor. The cofactor is Mg(2+).

The enzyme catalyses (2R)-2,3-dihydroxy-3-methylbutanoate = 3-methyl-2-oxobutanoate + H2O. The catalysed reaction is (2R,3R)-2,3-dihydroxy-3-methylpentanoate = (S)-3-methyl-2-oxopentanoate + H2O. Its pathway is amino-acid biosynthesis; L-isoleucine biosynthesis; L-isoleucine from 2-oxobutanoate: step 3/4. The protein operates within amino-acid biosynthesis; L-valine biosynthesis; L-valine from pyruvate: step 3/4. Its function is as follows. Functions in the biosynthesis of branched-chain amino acids. Catalyzes the dehydration of (2R,3R)-2,3-dihydroxy-3-methylpentanoate (2,3-dihydroxy-3-methylvalerate) into 2-oxo-3-methylpentanoate (2-oxo-3-methylvalerate) and of (2R)-2,3-dihydroxy-3-methylbutanoate (2,3-dihydroxyisovalerate) into 2-oxo-3-methylbutanoate (2-oxoisovalerate), the penultimate precursor to L-isoleucine and L-valine, respectively. This is Dihydroxy-acid dehydratase from Pseudomonas paraeruginosa (strain DSM 24068 / PA7) (Pseudomonas aeruginosa (strain PA7)).